The sequence spans 514 residues: 2,3-bisphosphoglycerate-independent phosphoglycerate mutase (514 aa).

Mn(2+)-binding residues include D14 and S64. The active-site Phosphoserine intermediate is S64. Substrate-binding positions include H125, 155-156, R187, R193, 263-266, and K336; these read RD and RADR. The Mn(2+) site is built by D403, H407, D444, H445, and H463.

The protein belongs to the BPG-independent phosphoglycerate mutase family. Monomer. Mn(2+) is required as a cofactor.

The catalysed reaction is (2R)-2-phosphoglycerate = (2R)-3-phosphoglycerate. It functions in the pathway carbohydrate degradation; glycolysis; pyruvate from D-glyceraldehyde 3-phosphate: step 3/5. Insensitive to vanadate. Catalyzes the interconversion of 2-phosphoglycerate (2-PGA) and 3-phosphoglycerate (3-PGA). In Escherichia coli (strain K12), this protein is 2,3-bisphosphoglycerate-independent phosphoglycerate mutase.